Consider the following 144-residue polypeptide: Transcriptional regulator MraZ (144 aa).

2 SpoVT-AbrB domains span residues 5–50 and 81–124; these read TFNH…ALPQ and AHEV…DRAA.

This sequence belongs to the MraZ family. In terms of assembly, forms oligomers.

The protein resides in the cytoplasm. It localises to the nucleoid. This Anaeromyxobacter dehalogenans (strain 2CP-C) protein is Transcriptional regulator MraZ.